Here is a 326-residue protein sequence, read N- to C-terminus: ELMO domain-containing protein 1 (326 aa).

One can recognise an ELMO domain in the interval 133-306; the sequence is QHEEMLLKLW…KFRKRIIKQL (174 aa).

Functionally, acts as a GTPase-activating protein (GAP) toward guanine nucleotide exchange factors like ARL2, ARL3, ARF1 and ARF6, but not for GTPases outside the Arf family. The sequence is that of ELMO domain-containing protein 1 (Elmod1) from Mus musculus (Mouse).